The primary structure comprises 239 residues: Probable transcriptional regulatory protein BAA_0622 (239 aa).

It belongs to the TACO1 family. YeeN subfamily.

The protein resides in the cytoplasm. This chain is Probable transcriptional regulatory protein BAA_0622, found in Bacillus anthracis (strain A0248).